The following is a 398-amino-acid chain: Alpha-2,8-sialyltransferase 8F (398 aa).

The Cytoplasmic segment spans residues 1 to 3; the sequence is MRP. A helical; Signal-anchor for type II membrane protein membrane pass occupies residues 4 to 24; it reads GGALLALLASLLLLLLLRLLW. Residues 25–398 lie on the Lumenal side of the membrane; the sequence is CPADAPGRAR…KLQFSKCEVA (374 aa). Asn-66, Asn-93, Asn-151, and Asn-196 each carry an N-linked (GlcNAc...) asparagine glycan. Disulfide bonds link Cys-186/Cys-335 and Cys-200/Cys-395. Substrate is bound by residues Asn-214, 236 to 238, and 322 to 324; these read NPS and STG. His-370 functions as the Proton donor/acceptor in the catalytic mechanism.

It belongs to the glycosyltransferase 29 family.

Its subcellular location is the golgi apparatus membrane. It catalyses the reaction a ganglioside GM3 + CMP-N-acetyl-beta-neuraminate = a ganglioside GD3 + CMP + H(+). The enzyme catalyses a ganglioside GM3 (d18:1(4E)) + CMP-N-acetyl-beta-neuraminate = a ganglioside GD3 (d18:1(4E)) + CMP + H(+). It carries out the reaction a ganglioside GD1a (d18:1(4E)) + CMP-N-acetyl-beta-neuraminate = a ganglioside GT1a (d18:1(4E)) + CMP + H(+). The catalysed reaction is a ganglioside GD1a + CMP-N-acetyl-beta-neuraminate = a ganglioside GT1a + CMP + H(+). It catalyses the reaction a ganglioside GM1b (d18:1(4E)) + CMP-N-acetyl-beta-neuraminate = a ganglioside GD1c (d18:1(4E)) + CMP + H(+). The enzyme catalyses a ganglioside GM1b + CMP-N-acetyl-beta-neuraminate = a ganglioside GD1c + CMP + H(+). It carries out the reaction a ganglioside GM4 (d18:1(4E)) + CMP-N-acetyl-beta-neuraminate = an N-acetyl-alpha-neuraminosyl-(2-&gt;8)-N-acetyl-alpha-neuraminosyl-(2-&gt;3)-beta-D-galactosyl-(1&lt;-&gt;1')-N-acylsphing-4-enine + CMP + H(+). The catalysed reaction is N-acetyl-alpha-neuraminosyl-(2-&gt;3)-beta-D-galactosyl-(1&lt;-&gt;1')-ceramide + CMP-N-acetyl-beta-neuraminate = N-acetyl-alpha-neuraminosyl-(2-&gt;8)-N-acetyl-alpha-neuraminosyl-(2-&gt;3)-beta-D-galactosyl-(1&lt;-&gt;1')-ceramide + CMP + H(+). It catalyses the reaction a ganglioside GT1b (d18:1(4E)) + CMP-N-acetyl-beta-neuraminate = a ganglioside GQ1b (d18:1(4E)) + CMP + H(+). The enzyme catalyses a ganglioside GT1b + CMP-N-acetyl-beta-neuraminate = a ganglioside GQ1b + CMP + H(+). It participates in protein modification; protein glycosylation. Functionally, alpha-2,8-sialyltransferase that prefers O-glycans to N-glycans or glycolipids as acceptor substrates. The minimal acceptor substrate is the NeuAc-alpha-2,3(6)-Gal sequence at the non-reducing end of their carbohydrate groups. The sequence is that of Alpha-2,8-sialyltransferase 8F (ST8SIA6) from Pan troglodytes (Chimpanzee).